Reading from the N-terminus, the 277-residue chain is Thymidylate synthase (277 aa).

Arg-21 contributes to the dUMP binding site. His-51 contributes to the (6R)-5,10-methylene-5,6,7,8-tetrahydrofolate binding site. DUMP is bound at residue 126-127 (RR). Cys-159 serves as the catalytic Nucleophile. Residues 179–182 (RSSD), Asn-190, and 220–222 (HAY) each bind dUMP. Asp-182 contributes to the (6R)-5,10-methylene-5,6,7,8-tetrahydrofolate binding site. Residue Ala-276 participates in (6R)-5,10-methylene-5,6,7,8-tetrahydrofolate binding.

The protein belongs to the thymidylate synthase family. Bacterial-type ThyA subfamily. As to quaternary structure, homodimer.

Its subcellular location is the cytoplasm. The enzyme catalyses dUMP + (6R)-5,10-methylene-5,6,7,8-tetrahydrofolate = 7,8-dihydrofolate + dTMP. Its pathway is pyrimidine metabolism; dTTP biosynthesis. Functionally, catalyzes the reductive methylation of 2'-deoxyuridine-5'-monophosphate (dUMP) to 2'-deoxythymidine-5'-monophosphate (dTMP) while utilizing 5,10-methylenetetrahydrofolate (mTHF) as the methyl donor and reductant in the reaction, yielding dihydrofolate (DHF) as a by-product. This enzymatic reaction provides an intracellular de novo source of dTMP, an essential precursor for DNA biosynthesis. The polypeptide is Thymidylate synthase (Pseudomonas fluorescens (strain SBW25)).